Consider the following 97-residue polypeptide: Ferredoxin-3 (97 aa).

4Fe-4S ferredoxin-type domains follow at residues 18-47 (FAES…LKAL) and 65-95 (KVMV…HNPL). Cys27, Cys30, Cys33, Cys37, Cys75, Cys78, Cys81, and Cys85 together coordinate [4Fe-4S] cluster.

Homodimer. It depends on [4Fe-4S] cluster as a cofactor.

In terms of biological role, ferredoxins are iron-sulfur proteins that transfer electrons in a wide variety of metabolic reactions. This chain is Ferredoxin-3 (fdxB), found in Nostoc sp. (strain PCC 7120 / SAG 25.82 / UTEX 2576).